The chain runs to 140 residues: Small ribosomal subunit protein eS17y (140 aa).

Belongs to the eukaryotic ribosomal protein eS17 family.

The protein is Small ribosomal subunit protein eS17y (RPS17B) of Arabidopsis thaliana (Mouse-ear cress).